The following is a 626-amino-acid chain: (+)-3-carene synthase 1, chloroplastic (626 aa).

A chloroplast-targeting transit peptide spans 1–45; that stretch reads MSLISAVPLASSCVSKSLISSVREHTALRRAIATLQMSRRGKSVA. The Mg(2+) site is built by Asp377, Asp381, and Asp529. A DDXXD motif motif is present at residues 377–381; it reads DDMYD.

This sequence belongs to the terpene synthase family. Tpsd subfamily. Requires Mg(2+) as cofactor. The cofactor is Mn(2+).

The protein resides in the plastid. It is found in the chloroplast. It catalyses the reaction (2E)-geranyl diphosphate = (+)-car-3-ene + diphosphate. It carries out the reaction (2E)-geranyl diphosphate = terpinolene + diphosphate. It participates in terpene metabolism; oleoresin biosynthesis. It functions in the pathway secondary metabolite biosynthesis; terpenoid biosynthesis. Monoterpene synthase (TPS) involved in the biosynthesis of monoterpene natural products included in conifer oleoresin secretions and volatile emissions; these compounds contribute to biotic and abiotic stress defense against herbivores and pathogens. Catalyzes the conversion of (2E)-geranyl diphosphate (GPP) to (+)-car-3-ene and, to a lower extent, to terpinolene. The sequence is that of (+)-3-carene synthase 1, chloroplastic from Pinus contorta (Shore pine).